We begin with the raw amino-acid sequence, 317 residues long: tRNA pseudouridine synthase B (317 aa).

Aspartate 47 functions as the Nucleophile in the catalytic mechanism.

The protein belongs to the pseudouridine synthase TruB family. Type 1 subfamily.

The enzyme catalyses uridine(55) in tRNA = pseudouridine(55) in tRNA. Functionally, responsible for synthesis of pseudouridine from uracil-55 in the psi GC loop of transfer RNAs. The polypeptide is tRNA pseudouridine synthase B (Shewanella frigidimarina (strain NCIMB 400)).